We begin with the raw amino-acid sequence, 192 residues long: Thymidine kinase (192 aa).

ATP contacts are provided by residues 9 to 16 and 87 to 90; these read SAMNAGKS and DECQ. The active-site Proton acceptor is the E88. Positions 145, 147, 182, and 185 each coordinate Zn(2+).

The protein belongs to the thymidine kinase family. As to quaternary structure, homotetramer.

The protein localises to the cytoplasm. The enzyme catalyses thymidine + ATP = dTMP + ADP + H(+). The chain is Thymidine kinase from Vibrio vulnificus (strain CMCP6).